The primary structure comprises 90 residues: Putative toxin RelE1 (90 aa).

This sequence belongs to the RelE toxin family.

Its function is as follows. Toxic component of a type II toxin-antitoxin (TA) system. Its cognate antitoxin is RelB1 (Potential). The chain is Putative toxin RelE1 (relE1) from Methanocaldococcus jannaschii (strain ATCC 43067 / DSM 2661 / JAL-1 / JCM 10045 / NBRC 100440) (Methanococcus jannaschii).